We begin with the raw amino-acid sequence, 125 residues long: Glycine cleavage system H protein (125 aa).

Residues 22–104 (VATVGITIHA…EGEGWLFKLK (83 aa)) enclose the Lipoyl-binding domain. At Lys63 the chain carries N6-lipoyllysine.

Belongs to the GcvH family. The glycine cleavage system is composed of four proteins: P, T, L and H. (R)-lipoate is required as a cofactor.

Functionally, the glycine cleavage system catalyzes the degradation of glycine. The H protein shuttles the methylamine group of glycine from the P protein to the T protein. The sequence is that of Glycine cleavage system H protein from Brucella abortus (strain 2308).